A 201-amino-acid chain; its full sequence is Imidazole glycerol phosphate synthase subunit HisH (201 aa).

The region spanning 1–201 is the Glutamine amidotransferase type-1 domain; that stretch reads MVFIADYGAG…LQVLRNFAEC (201 aa). Cysteine 79 serves as the catalytic Nucleophile. Active-site residues include histidine 183 and glutamate 185.

As to quaternary structure, heterodimer of HisH and HisF.

It localises to the cytoplasm. The catalysed reaction is 5-[(5-phospho-1-deoxy-D-ribulos-1-ylimino)methylamino]-1-(5-phospho-beta-D-ribosyl)imidazole-4-carboxamide + L-glutamine = D-erythro-1-(imidazol-4-yl)glycerol 3-phosphate + 5-amino-1-(5-phospho-beta-D-ribosyl)imidazole-4-carboxamide + L-glutamate + H(+). The enzyme catalyses L-glutamine + H2O = L-glutamate + NH4(+). Its pathway is amino-acid biosynthesis; L-histidine biosynthesis; L-histidine from 5-phospho-alpha-D-ribose 1-diphosphate: step 5/9. In terms of biological role, IGPS catalyzes the conversion of PRFAR and glutamine to IGP, AICAR and glutamate. The HisH subunit catalyzes the hydrolysis of glutamine to glutamate and ammonia as part of the synthesis of IGP and AICAR. The resulting ammonia molecule is channeled to the active site of HisF. This Chlorobium luteolum (strain DSM 273 / BCRC 81028 / 2530) (Pelodictyon luteolum) protein is Imidazole glycerol phosphate synthase subunit HisH.